Consider the following 184-residue polypeptide: Orotate phosphoribosyltransferase (184 aa).

Residues arginine 99, lysine 100, lysine 103, histidine 105, and 125-133 each bind 5-phospho-alpha-D-ribose 1-diphosphate; that span reads EDTTTTGNS. Positions 129 and 157 each coordinate orotate.

Belongs to the purine/pyrimidine phosphoribosyltransferase family. PyrE subfamily. As to quaternary structure, homodimer. Mg(2+) is required as a cofactor.

The enzyme catalyses orotidine 5'-phosphate + diphosphate = orotate + 5-phospho-alpha-D-ribose 1-diphosphate. It functions in the pathway pyrimidine metabolism; UMP biosynthesis via de novo pathway; UMP from orotate: step 1/2. Catalyzes the transfer of a ribosyl phosphate group from 5-phosphoribose 1-diphosphate to orotate, leading to the formation of orotidine monophosphate (OMP). The protein is Orotate phosphoribosyltransferase of Corynebacterium glutamicum (strain R).